Consider the following 428-residue polypeptide: Protein clpf-1 (428 aa).

Residues glutamate 16, arginine 56, and aspartate 124–threonine 129 each bind ATP.

Belongs to the Clp1 family. Clp1 subfamily.

The protein resides in the nucleus. Its function is as follows. Required for endonucleolytic cleavage during polyadenylation-dependent pre-mRNA 3'-end formation. In Caenorhabditis elegans, this protein is Protein clpf-1.